Here is a 123-residue protein sequence, read N- to C-terminus: Nitrogen fixation nifHD1 region GlnB-like protein 2 (123 aa).

Belongs to the P(II) protein family.

In terms of biological role, could be involved in the regulation of nitrogen fixation. This Methanosarcina barkeri protein is Nitrogen fixation nifHD1 region GlnB-like protein 2 (glnBB).